Consider the following 558-residue polypeptide: Putative cation/proton antiporter YbaL (558 aa).

Over 1–3 (MHH) the chain is Periplasmic. Residues 4 to 24 (ATPLITTIVGGLVLAFILGML) form a helical membrane-spanning segment. Over 25–31 (ANKLRIS) the chain is Cytoplasmic. The chain crosses the membrane as a helical span at residues 32-52 (PLVGYLLAGVLAGPFTPGFVA). Over 53–55 (DTK) the chain is Periplasmic. Residues 56–76 (LAPELAELGVILLMFGVGLHF) form a helical membrane-spanning segment. The Cytoplasmic portion of the chain corresponds to 77-85 (SLKDLMAVK). A helical transmembrane segment spans residues 86–106 (AIAIPGAIAQIAVATLLGMAL). Residues 107–112 (SAVLGW) lie on the Periplasmic side of the membrane. Residues 113–133 (SLMTGIVFGLCLSTASTVVLL) form a helical membrane-spanning segment. Residues 134–148 (RALEERQLIDSQRGQ) lie on the Cytoplasmic side of the membrane. The helical transmembrane segment at 149–169 (IAIGWLIVEDLVMVLTLVLLP) threads the bilayer. Topologically, residues 170–185 (AVAGMMEQGDVGFATL) are periplasmic. The helical transmembrane segment at 186–206 (AVDMGITIGKVIAFIAIMMLV) threads the bilayer. Over 207–225 (GRRLVPWIMARSAATGSRE) the chain is Cytoplasmic. Residues 226-246 (LFTLSVLALALGVAFGAVELF) traverse the membrane as a helical segment. A topological domain (periplasmic) is located at residue Asp247. A helical membrane pass occupies residues 248 to 268 (VSFALGAFFAGMVLNESELSH). The Cytoplasmic portion of the chain corresponds to 269-279 (RAAHDTLPLRD). The helical transmembrane segment at 280–300 (AFAVLFFVSVGMLFDPLILIQ) threads the bilayer. The Periplasmic portion of the chain corresponds to 301–303 (QPL). A helical membrane pass occupies residues 304 to 324 (AVLATLAIILFGKSLAAFFLV). At 325-336 (RLFGHSQRTALT) the chain is on the cytoplasmic side. Residues 337–357 (IAASLAQIGEFAFILAGLGMA) form a helical membrane-spanning segment. Residues 358-367 (LNLLPQAGQN) are Periplasmic-facing. A helical transmembrane segment spans residues 368-388 (LVLAGAILSIMLNPVLFALLE). Topologically, residues 389-558 (KYLAKTETLE…TPPAGEVVTG (170 aa)) are cytoplasmic. The region spanning 417-534 (CNHALLVGYG…TERGANQVVM (118 aa)) is the RCK N-terminal domain. AMP contacts are provided by residues 427–428 (RV), 447–448 (ET), 467–468 (NA), Glu494, and Arg514.

It belongs to the monovalent cation:proton antiporter 2 (CPA2) transporter (TC 2.A.37) family.

The protein resides in the cell inner membrane. The sequence is that of Putative cation/proton antiporter YbaL (ybaL) from Escherichia coli (strain K12).